Consider the following 196-residue polypeptide: ATP-dependent Clp protease proteolytic subunit (196 aa).

Catalysis depends on serine 96, which acts as the Nucleophile. Histidine 121 is an active-site residue.

The protein belongs to the peptidase S14 family. As to quaternary structure, fourteen ClpP subunits assemble into 2 heptameric rings which stack back to back to give a disk-like structure with a central cavity, resembling the structure of eukaryotic proteasomes.

The protein resides in the cytoplasm. The catalysed reaction is Hydrolysis of proteins to small peptides in the presence of ATP and magnesium. alpha-casein is the usual test substrate. In the absence of ATP, only oligopeptides shorter than five residues are hydrolyzed (such as succinyl-Leu-Tyr-|-NHMec, and Leu-Tyr-Leu-|-Tyr-Trp, in which cleavage of the -Tyr-|-Leu- and -Tyr-|-Trp bonds also occurs).. Cleaves peptides in various proteins in a process that requires ATP hydrolysis. Has a chymotrypsin-like activity. Plays a major role in the degradation of misfolded proteins. This is ATP-dependent Clp protease proteolytic subunit from Streptococcus mutans serotype c (strain ATCC 700610 / UA159).